The following is a 230-amino-acid chain: Demethylluteothin O-methyltransferase (230 aa).

This sequence belongs to the methyltransferase superfamily.

The enzyme catalyses demethylluteothin + S-adenosyl-L-methionine = luteothin + S-adenosyl-L-homocysteine. Its pathway is antibiotic biosynthesis. It functions in the pathway polyketide biosynthesis. Its function is as follows. Methyltransferase involved in the biosynthesis of the antibiotic aureothin, a nitroaryl polyketide metabolite with antifungal, cytotoxic and insecticidal activities. Catalyzes the methylation of demethylluteothin to luteothin (also called deoxyaureothin). Is specific for its gamma-pyrone substrate, and does not act on the alpha-pyrone isomer. This Streptomyces thioluteus protein is Demethylluteothin O-methyltransferase.